The sequence spans 154 residues: MVALKGVPALLSPELLYALARMGHGDEIVLADLNFPASSICQCGPMEIRADGLGIPQLLEAVLKLLPLDTYVESPAAVMELVPSDKERGLQTPVWTEYESILRRAGCVRALAKIERFEFYERAKKAFAVVATGETALYGNLILRKGVLALNPLL.

The active-site Proton donor is His-24. Position 32 (Asp-32) interacts with substrate. The active site involves Asp-69. Positions 79, 120, 138, and 140 each coordinate substrate. The active site involves Tyr-120.

Belongs to the RbsD / FucU family. In terms of assembly, mainly homodimer, but also exists as homotetramer, homooctamer, and homodecamer. The homodimeric form seems catalytically inactive.

It carries out the reaction alpha-L-fucose = beta-L-fucose. It functions in the pathway carbohydrate metabolism; L-fucose metabolism. Involved in the interconversion between alpha- and beta-L-fucoses. L-Fucose (6-deoxy-L-galactose) exists as alpha-L-fucose (29.5%) and beta-L-fucose (70.5%), the beta-form is metabolized through the salvage pathway. GDP-L-fucose formed either by the de novo or salvage pathways is transported into the endoplasmic reticulum, where it serves as a substrate for N- and O-glycosylations by fucosyltransferases. Fucosylated structures expressed on cell surfaces or secreted in biological fluids are believed to play a critical role in cell-cell adhesion and recognition processes. In Homo sapiens (Human), this protein is Fucose mutarotase (FUOM).